Reading from the N-terminus, the 190-residue chain is NADH-quinone oxidoreductase subunit B (190 aa).

Positions 69, 70, 134, and 164 each coordinate [4Fe-4S] cluster.

Belongs to the complex I 20 kDa subunit family. NDH-1 is composed of 14 different subunits. Subunits NuoB, C, D, E, F, and G constitute the peripheral sector of the complex. It depends on [4Fe-4S] cluster as a cofactor.

The protein resides in the cell inner membrane. The catalysed reaction is a quinone + NADH + 5 H(+)(in) = a quinol + NAD(+) + 4 H(+)(out). Its function is as follows. NDH-1 shuttles electrons from NADH, via FMN and iron-sulfur (Fe-S) centers, to quinones in the respiratory chain. Couples the redox reaction to proton translocation (for every two electrons transferred, four hydrogen ions are translocated across the cytoplasmic membrane), and thus conserves the redox energy in a proton gradient. The sequence is that of NADH-quinone oxidoreductase subunit B from Hyphomonas neptunium (strain ATCC 15444).